A 735-amino-acid polypeptide reads, in one-letter code: Serine/threonine-protein kinase BRSK2 (735 aa).

The Protein kinase domain maps to 20 to 271; the sequence is YRLEKTLGKG…LEHIQKHIWY (252 aa). Residues 26–34 and Lys49 each bind ATP; that span reads LGKGQTGLV. Asp142 functions as the Proton acceptor in the catalytic mechanism. At Thr175 the chain carries Phosphothreonine; by LKB1. At Thr261 the chain carries Phosphothreonine; by PKA. Residue Ser295 is modified to Phosphoserine. The 43-residue stretch at 298–340 folds into the UBA domain; the sequence is DIDPDVLDSMHSLGCFRDRNKLLQDLLSEEENQEKMIYFLLLD. Residues 346–367 are compositionally biased toward basic and acidic residues; sequence PSHEDEDLPPRNEIDPPRKRVD. Disordered stretches follow at residues 346 to 476 and 492 to 516; these read PSHE…GVPW and RFHRRKLQVPTPEEMSNLTPESSPE. Residues Ser368, Ser383, Ser394, Ser413, Ser424, and Ser428 each carry the phosphoserine modification. The segment covering 411-429 has biased composition (low complexity); the sequence is SRSISGASSGLSTSPLSSP. Positions 432-446 are enriched in pro residues; it reads TPHPSPRGSPLPTPK. Ser456 carries the phosphoserine modification. Thr460, Thr464, and Thr510 each carry phosphothreonine. Phosphoserine occurs at positions 513, 514, and 521. The KEN box motif lies at 604–606; that stretch reads KEN. Residues 682–735 are disordered; sequence KNGQAAQAPSTPAKRSAHGPLGDSAAAGPGGDTEYPMGKDMAKMGPPAARREQP.

It belongs to the protein kinase superfamily. CAMK Ser/Thr protein kinase family. SNF1 subfamily. As to quaternary structure, interacts with FZR1, a regulatory subunit of the APC ubiquitin ligase complex. Interacts with COPS5. Interacts with PAK1. Mg(2+) is required as a cofactor. In terms of processing, may be phosphorylated at Thr-261 by PKA. Phosphorylated at Thr-175 by STK11/LKB1 in complex with STE20-related adapter-alpha (STRADA) pseudo kinase and CAB39. Not phosphorylated at Thr-175 by CaMKK2. In contrast, it is phosphorylated and activated by CaMKK1. May be inactivated via dephosphorylation of Thr-175 by PP2C. Polyubiquitinated by the APC complex in conjunction with FZR1, leading to its proteasomal degradation. Targeted for proteasomal degradation by interaction with COPS5. BRSK2 levels change during the cell cycle. BRSK2 levels are low at the G1/S boundary and gradually increase as cells progress into G2 phase. BRSK2 levels decrease rapidly at the end of mitosis. In terms of tissue distribution, detected in pancreas islets and in brain (at protein level). Detected in brain and pancreas.

The protein resides in the cytoplasm. It localises to the cytoskeleton. The protein localises to the microtubule organizing center. Its subcellular location is the centrosome. It is found in the perinuclear region. The protein resides in the endoplasmic reticulum. The catalysed reaction is L-seryl-[protein] + ATP = O-phospho-L-seryl-[protein] + ADP + H(+). It carries out the reaction L-threonyl-[protein] + ATP = O-phospho-L-threonyl-[protein] + ADP + H(+). It catalyses the reaction L-seryl-[tau protein] + ATP = O-phospho-L-seryl-[tau protein] + ADP + H(+). The enzyme catalyses L-threonyl-[tau protein] + ATP = O-phospho-L-threonyl-[tau protein] + ADP + H(+). With respect to regulation, activated by phosphorylation on Thr-175 by STK11/LKB1. In terms of biological role, serine/threonine-protein kinase that plays a key role in polarization of neurons and axonogenesis, cell cycle progress and insulin secretion. Phosphorylates CDK16, CDC25C, MAPT/TAU, PAK1 and WEE1. Following phosphorylation and activation by STK11/LKB1, acts as a key regulator of polarization of cortical neurons, probably by mediating phosphorylation of microtubule-associated proteins such as MAPT/TAU at 'Thr-504' and 'Ser-554'. Also regulates neuron polarization by mediating phosphorylation of WEE1 at 'Ser-642' in post-mitotic neurons, leading to down-regulate WEE1 activity in polarized neurons. Plays a role in the regulation of the mitotic cell cycle progress and the onset of mitosis. Plays a role in the regulation of insulin secretion in response to elevated glucose levels, probably via phosphorylation of CDK16 and PAK1. While BRSK2 phosphorylated at Thr-175 can inhibit insulin secretion, BRSK2 phosphorylated at Thr-261 can promote insulin secretion. Regulates reorganization of the actin cytoskeleton. May play a role in the apoptotic response triggered by endoplasmic reticulum (ER) stress. This chain is Serine/threonine-protein kinase BRSK2 (Brsk2), found in Mus musculus (Mouse).